We begin with the raw amino-acid sequence, 181 residues long: ATP-dependent protease subunit HslV (181 aa).

The active site involves threonine 7. Na(+) contacts are provided by glycine 166, cysteine 169, and threonine 172.

It belongs to the peptidase T1B family. HslV subfamily. In terms of assembly, a double ring-shaped homohexamer of HslV is capped on each side by a ring-shaped HslU homohexamer. The assembly of the HslU/HslV complex is dependent on binding of ATP.

The protein resides in the cytoplasm. It carries out the reaction ATP-dependent cleavage of peptide bonds with broad specificity.. With respect to regulation, allosterically activated by HslU binding. Its function is as follows. Protease subunit of a proteasome-like degradation complex believed to be a general protein degrading machinery. The chain is ATP-dependent protease subunit HslV from Delftia acidovorans (strain DSM 14801 / SPH-1).